The chain runs to 105 residues: Ketoisovalerate oxidoreductase subunit VorD (105 aa).

2 4Fe-4S ferredoxin-type domains span residues 44-73 (FMPVIDESKCVKCYICWKFCPEPAIYIKED) and 74-103 (GFVAIDYDYCKGCGICANECPTKAITMVRE). Positions 53, 56, 59, 63, 83, 86, 89, and 93 each coordinate [4Fe-4S] cluster.

In terms of assembly, heterotetramer of one alpha, one beta, one delta and one gamma chain. [4Fe-4S] cluster serves as cofactor.

It carries out the reaction 3-methyl-2-oxobutanoate + 2 oxidized [2Fe-2S]-[ferredoxin] + CoA = 2-methylpropanoyl-CoA + 2 reduced [2Fe-2S]-[ferredoxin] + CO2 + H(+). The polypeptide is Ketoisovalerate oxidoreductase subunit VorD (vorD) (Pyrococcus abyssi (strain GE5 / Orsay)).